The chain runs to 84 residues: Conophysin-R (84 aa).

7 cysteine pairs are disulfide-bonded: Cys6-Cys46, Cys9-Cys20, Cys14-Cys36, Cys21-Cys26, Cys53-Cys71, Cys65-Cys83, and Cys72-Cys77.

In terms of tissue distribution, expressed by the venom duct.

It localises to the secreted. Its function is as follows. Targets vasopressin-oxytocin related receptors. No effect observed when injected into goldfish or into mice. This Conus radiatus (Rayed cone) protein is Conophysin-R.